The primary structure comprises 207 residues: Dephospho-CoA kinase (207 aa).

Positions 10-207 (TLGLTGGIGS…FYLTLRGGQS (198 aa)) constitute a DPCK domain. An ATP-binding site is contributed by 18 to 23 (GSGKSA).

Belongs to the CoaE family.

It is found in the cytoplasm. It carries out the reaction 3'-dephospho-CoA + ATP = ADP + CoA + H(+). Its pathway is cofactor biosynthesis; coenzyme A biosynthesis; CoA from (R)-pantothenate: step 5/5. Its function is as follows. Catalyzes the phosphorylation of the 3'-hydroxyl group of dephosphocoenzyme A to form coenzyme A. This is Dephospho-CoA kinase from Pseudomonas fluorescens (strain ATCC BAA-477 / NRRL B-23932 / Pf-5).